We begin with the raw amino-acid sequence, 62 residues long: DNA-directed RNA polymerase subunit omega (62 aa).

It belongs to the RNA polymerase subunit omega family. In terms of assembly, the RNAP catalytic core consists of 2 alpha, 1 beta, 1 beta' and 1 omega subunit. When a sigma factor is associated with the core the holoenzyme is formed, which can initiate transcription.

The enzyme catalyses RNA(n) + a ribonucleoside 5'-triphosphate = RNA(n+1) + diphosphate. Its function is as follows. Promotes RNA polymerase assembly. Latches the N- and C-terminal regions of the beta' subunit thereby facilitating its interaction with the beta and alpha subunits. The sequence is that of DNA-directed RNA polymerase subunit omega from Wigglesworthia glossinidia brevipalpis.